A 267-amino-acid chain; its full sequence is Energy-coupling factor transporter transmembrane protein EcfT (267 aa).

The next 5 membrane-spanning stretches (helical) occupy residues 26-46, 73-93, 116-136, 151-171, and 247-267; these read IILTFIMMIFIFLINTYWGYL, ILFIVVFAGIINIFMIKGTVI, LFLLIITASLLTYTTTPIALT, VPVHEIAMMMTIALRFIPTLL, and LVTGITVVFMTWVILMEYVFF.

This sequence belongs to the energy-coupling factor EcfT family. In terms of assembly, forms a stable energy-coupling factor (ECF) transporter complex composed of 2 membrane-embedded substrate-binding proteins (S component), 2 ATP-binding proteins (A component) and 2 transmembrane proteins (T component). May be able to interact with more than 1 S component at a time.

It localises to the cell membrane. Functionally, transmembrane (T) component of an energy-coupling factor (ECF) ABC-transporter complex. Unlike classic ABC transporters this ECF transporter provides the energy necessary to transport a number of different substrates. This chain is Energy-coupling factor transporter transmembrane protein EcfT, found in Ruminiclostridium cellulolyticum (strain ATCC 35319 / DSM 5812 / JCM 6584 / H10) (Clostridium cellulolyticum).